Reading from the N-terminus, the 579-residue chain is Folliculin (579 aa).

Residues 32–82 are disordered; it reads GAGSGDGAGRGEPADEEEGGIQMSSRIRAHSPAEGASAESSSPGPKKSDMC. Phosphoserine occurs at positions 62 and 73. Residues 63 to 76 are compositionally biased toward low complexity; that stretch reads PAEGASAESSSPGP. The uDENN FLCN/SMCR8-type domain maps to 86 to 242; sequence RSLAAGHPGY…RNGNAARSLT (157 aa). Residues 285-309 adopt a coiled-coil conformation; it reads QMEQLAELEEESESWDNSEAEEEEK. Residues 294–308 are compositionally biased toward acidic residues; that stretch reads EESESWDNSEAEEEE. Positions 294–321 are disordered; sequence EESESWDNSEAEEEEKGPALPEGAEGRE. A phosphoserine mark is found at Ser302, Ser406, Ser537, Ser542, and Ser571. Residues 339–491 form the cDENN FLCN/SMCR8-type domain; it reads QPRKLSVFKS…ILNKMEAALT (153 aa). The region spanning 493 to 558 is the dDENN FLCN/SMCR8-type domain; the sequence is QNLSVDVVDQ…LLKFWMTGLS (66 aa).

It belongs to the folliculin family. In terms of assembly, interacts (via C-terminus) with FNIP1 or FNIP2 (via C-terminus). Component of the lysosomal folliculin complex (LFC), composed of FLCN, FNIP1 (or FNIP2), RagA/RRAGA or RagB/RRAGB GDP-bound, RagC/RRAGC or RagD/RRAGD GTP-bound, and Ragulator. Interaction with FNIP1 or FNIP2 mediates indirect interaction with the PRKAA1, PRKAB1 and PRKAG1 subunits of 5'-AMP-activated protein kinase (AMPK). Interacts with HSP90AA1 in the presence of FNIP1. Interacts with HSP70, STUB1, CDC37, AHSA1, CCT2, STIP1, PTGES3 and PPP5C. Interacts with GABARAP; interaction takes place in the presence of FNIP1 and/or FNIP2. Interacts with RILP; the interaction is direct and promotes association between RILP and RAB34. Interacts with KIF3A and KIF3B. Interacts with lactate dehydrogenase LDHA, but not LDHB; the interaction is direct, may preferentially bind LDHA dimers rather than tetramers, and regulates LDHA activity, acting as an uncompetitive inhibitor. Post-translationally, phosphorylation by ULK1 modulates the interaction with GABARAP and is required to regulate autophagy.

The protein resides in the lysosome membrane. It is found in the cytoplasm. It localises to the cytosol. The protein localises to the cell projection. Its subcellular location is the cilium. The protein resides in the cytoskeleton. It is found in the microtubule organizing center. It localises to the centrosome. The protein localises to the spindle. Its subcellular location is the nucleus. Its activity is regulated as follows. GTPase-activating activity is inhibited in the folliculin complex (LFC), which stabilizes the GDP-bound state of RagA/RRAGA (or RagB/RRAGB), because Arg-164 is located far from the RagC/RRAGC or RagD/RRAGD nucleotide pocket. Disassembly of the LFC complex upon amino acid restimulation liberates the GTPase-activating activity. Functionally, multi-functional protein, involved in both the cellular response to amino acid availability and in the regulation of glycolysis. GTPase-activating protein that plays a key role in the cellular response to amino acid availability through regulation of the non-canonical mTORC1 signaling cascade controlling the MiT/TFE factors TFEB and TFE3. Activates mTORC1 by acting as a GTPase-activating protein: specifically stimulates GTP hydrolysis by RagC/RRAGC or RagD/RRAGD, promoting the conversion to the GDP-bound state of RagC/RRAGC or RagD/RRAGD, and thereby activating the kinase activity of mTORC1. The GTPase-activating activity is inhibited during starvation and activated in presence of nutrients. Acts as a key component for non-canonical mTORC1-dependent control of the MiT/TFE factors TFEB and TFE3, while it is not involved in mTORC1-dependent phosphorylation of canonical RPS6KB1/S6K1 and EIF4EBP1/4E-BP1. In low-amino acid conditions, the lysosomal folliculin complex (LFC) is formed on the membrane of lysosomes, which inhibits the GTPase-activating activity of FLCN, inactivates mTORC1 and maximizes nuclear translocation of TFEB and TFE3. Upon amino acid restimulation, RagA/RRAGA (or RagB/RRAGB) nucleotide exchange promotes disassembly of the LFC complex and liberates the GTPase-activating activity of FLCN, leading to activation of mTORC1 and subsequent cytoplasmic retention of TFEB and TFE3. Indirectly acts as a positive regulator of Wnt signaling by promoting mTOR-dependent cytoplasmic retention of MiT/TFE factor TFE3. Required for the exit of hematopoietic stem cell from pluripotency by promoting mTOR-dependent cytoplasmic retention of TFE3, thereby increasing Wnt signaling. Involved in the control of embryonic stem cells differentiation; together with LAMTOR1 it is necessary to recruit and activate RagC/RRAGC and RagD/RRAGD at the lysosomes, and to induce exit of embryonic stem cells from pluripotency via non-canonical, mTOR-independent TFE3 inactivation. Acts as an inhibitor of browning of adipose tissue by regulating mTOR-dependent cytoplasmic retention of TFE3. In response to flow stress, regulates STK11/LKB1 accumulation and mTORC1 activation through primary cilia: may act by recruiting STK11/LKB1 to primary cilia for activation of AMPK resided at basal bodies, causing mTORC1 down-regulation. Together with FNIP1 and/or FNIP2, regulates autophagy: following phosphorylation by ULK1, interacts with GABARAP and promotes autophagy. Required for starvation-induced perinuclear clustering of lysosomes by promoting association of RILP with its effector RAB34. Regulates glycolysis by binding to lactate dehydrogenase LDHA, acting as an uncompetitive inhibitor. The protein is Folliculin of Bos taurus (Bovine).